The primary structure comprises 146 residues: UPF0735 ACT domain-containing protein Teth514_2312 (146 aa).

Positions 71–146 constitute an ACT domain; that stretch reads TLSMVLDHMP…GVRKIEILGE (76 aa).

This sequence belongs to the UPF0735 family.

The polypeptide is UPF0735 ACT domain-containing protein Teth514_2312 (Thermoanaerobacter sp. (strain X514)).